An 87-amino-acid chain; its full sequence is Small ribosomal subunit protein bS20 (87 aa).

Belongs to the bacterial ribosomal protein bS20 family.

In terms of biological role, binds directly to 16S ribosomal RNA. The polypeptide is Small ribosomal subunit protein bS20 (Corynebacterium jeikeium (strain K411)).